The primary structure comprises 862 residues: Protein argonaute-2 (862 aa).

The region spanning 232–351 (PVIEFMCEVL…LPLEVCNIVA (120 aa)) is the PAZ domain. Interaction with guide RNA regions lie at residues 314-319 (YFKDRH) and 527-569 (GKTP…LCLK). The Piwi domain maps to 520-821 (LVVVILPGKT…VAFRARYHLV (302 aa)). The interaction with GW182 family members stretch occupies residues 590–593 (FQQP). Position 600 (Asp-600) interacts with a divalent metal cation. An interaction with GW182 family members region spans residues 653–663 (LIQFYKSTRFK). Asp-672 is an a divalent metal cation binding site. 3 interaction with guide RNA regions span residues 712–713 (KR), 756–764 (HAGIQGTSR), and 793–815 (YVRC…VAFR). His-810 contributes to the a divalent metal cation binding site. Residues 825–847 (HDSAEGSHTSGQSNGRDQQALAK) are disordered. The segment covering 830–841 (GSHTSGQSNGRD) has biased composition (polar residues).

It belongs to the argonaute family. Ago subfamily. As to quaternary structure, component of the RISC loading complex (RLC), or micro-RNA (miRNA) loading complex (miRLC), which is composed of dicer1, ago2 and tarbp2. Note that the trimeric RLC/miRLC is also referred to as RISC. It depends on Mg(2+) as a cofactor. Requires Mn(2+) as cofactor.

It is found in the cytoplasm. Its subcellular location is the P-body. It catalyses the reaction Endonucleolytic cleavage to 5'-phosphomonoester.. Functionally, required for RNA-mediated gene silencing (RNAi) by the RNA-induced silencing complex (RISC). The 'minimal RISC' appears to include ago2 bound to a short guide RNA such as a microRNA (miRNA) or short interfering RNA (siRNA). These guide RNAs direct RISC to complementary mRNAs that are targets for RISC-mediated gene silencing. The precise mechanism of gene silencing depends on the degree of complementarity between the miRNA or siRNA and its target. Binding of RISC to a perfectly complementary mRNA generally results in silencing due to endonucleolytic cleavage of the mRNA specifically by ago2. Binding of RISC to a partially complementary mRNA results in silencing through inhibition of translation, and this is independent of endonuclease activity. The inhibition of translational initiation leads to the accumulation of the affected mRNA in cytoplasmic processing bodies (P-bodies), where mRNA degradation may subsequently occur. In Xenopus laevis (African clawed frog), this protein is Protein argonaute-2 (ago2).